A 289-amino-acid polypeptide reads, in one-letter code: ATP synthase gamma chain (289 aa).

The protein belongs to the ATPase gamma chain family. F-type ATPases have 2 components, CF(1) - the catalytic core - and CF(0) - the membrane proton channel. CF(1) has five subunits: alpha(3), beta(3), gamma(1), delta(1), epsilon(1). CF(0) has three main subunits: a, b and c.

The protein resides in the cell membrane. Its function is as follows. Produces ATP from ADP in the presence of a proton gradient across the membrane. The gamma chain is believed to be important in regulating ATPase activity and the flow of protons through the CF(0) complex. The polypeptide is ATP synthase gamma chain (Lactococcus lactis subsp. cremoris (strain MG1363)).